The following is a 395-amino-acid chain: Probable alcohol dehydrogenase EutG (395 aa).

Residues aspartate 57, 116 to 120 (GSVLD), 156 to 160 (TTAGT), lysine 178, and 197 to 201 (VTEGV) each bind NAD(+). Positions 212, 216, 281, and 295 each coordinate Fe cation. NAD(+) is bound by residues histidine 295 and aspartate 354.

It belongs to the iron-containing alcohol dehydrogenase family. The cofactor is Fe cation.

It localises to the bacterial microcompartment. It carries out the reaction ethanol + NAD(+) = acetaldehyde + NADH + H(+). The protein operates within amine and polyamine degradation; ethanolamine degradation. Its function is as follows. Probably acts on the acetaldehyde produced by the degradation of ethanolamine, producing ethanol. Functionally, expression of the eut operon allows this bacteria to use ethanolamine (EA) as a carbon, nitrogen and energy source. It relies on cobalamin (vitamin B12) both as a cofactor for the ethanolamine ammonia-lyase (EAL) activity and to induce the operon. EA enhances bacterial survival in macrophages in a concentration-dependent manner, suggesting it is an important nutrient during infection. This Salmonella typhimurium (strain LT2 / SGSC1412 / ATCC 700720) protein is Probable alcohol dehydrogenase EutG.